Consider the following 521-residue polypeptide: FAD-dependent monooxygenase DEP2 (521 aa).

An N-terminal signal peptide occupies residues 1–22 (MHDSPPFKVIIVGAGVTGLTLA). 2 residues coordinate FAD: Asp36 and Arg109. Asn139 and Asn220 each carry an N-linked (GlcNAc...) asparagine glycan. Residues Asp310 and Gly323 each contribute to the FAD site. Residues 477–497 (ILVLWAGLWLAICFFHLVFSG) traverse the membrane as a helical segment. Asn515 carries N-linked (GlcNAc...) asparagine glycosylation.

It belongs to the paxM FAD-dependent monooxygenase family. Requires FAD as cofactor.

It is found in the membrane. The protein operates within polyketide biosynthesis. Part of the gene cluster that mediates the biosynthesis of depudecin, a highly oxidized eleven-carbon linear polyketide that acts as a histone deacetylase (HDAC) inhibitor and makes a small contribution to pathogenesis. The reducing polyketide synthase DEP5 is the central enzyme in depudecin biosynthesis by yielding the backbone polyketide chain. The monooxygenases DEP2 and DEP4, as well as the uncharacterized protein DEP1, then act as tailoring enzymes to modify the intermediate polyketide chain into depudecin. This is FAD-dependent monooxygenase DEP2 from Fusarium langsethiae.